Here is a 359-residue protein sequence, read N- to C-terminus: Biotin synthase (359 aa).

In terms of domain architecture, Radical SAM core spans 47–276; the sequence is HHGRRVRIHV…EADLRMAGGR (230 aa). Residues Cys-65, Cys-69, and Cys-72 each contribute to the [4Fe-4S] cluster site. 4 residues coordinate [2Fe-2S] cluster: Cys-109, Cys-141, Cys-201, and Arg-271. The tract at residues 320-359 is disordered; sequence EPVIVEDGPERQTPATADDTPSGDPEAADRRRQPSAGPAG.

Belongs to the radical SAM superfamily. Biotin synthase family. Homodimer. [4Fe-4S] cluster serves as cofactor. It depends on [2Fe-2S] cluster as a cofactor.

The enzyme catalyses (4R,5S)-dethiobiotin + (sulfur carrier)-SH + 2 reduced [2Fe-2S]-[ferredoxin] + 2 S-adenosyl-L-methionine = (sulfur carrier)-H + biotin + 2 5'-deoxyadenosine + 2 L-methionine + 2 oxidized [2Fe-2S]-[ferredoxin]. It functions in the pathway cofactor biosynthesis; biotin biosynthesis; biotin from 7,8-diaminononanoate: step 2/2. Catalyzes the conversion of dethiobiotin (DTB) to biotin by the insertion of a sulfur atom into dethiobiotin via a radical-based mechanism. The sequence is that of Biotin synthase from Salinibacter ruber (strain DSM 13855 / M31).